The sequence spans 713 residues: MGDEDWEAEILKPHVSSYVPVFEKDKYSSGANGDTFNRTSASSSEMEDGPSGRDHFMRSGFSSGRNLGNRDIGESSKRETTSTTGGFGRGKGFGNRGFLNNKFEEGDSSGFWKESTNDCEDTQTRSRGFSKRGGYPDGNDSEASGPFRRGGRDSEYDQDQGSQRGGGLFGSRKPAASDSGSGDTFQSRSGNARGAYKGLNEEVVTGSGKNSWKSEAEGGESSDIQGPKVTYIPPPPPEDEDSIFAHYQTGINFDKYDTILVEVSGHDAPPAILTFEEANLCQTLNNNIAKAGYTKLTPVQKYSIPIVLAGRDLMACAQTGSGKTAAFLLPILAHMMRDGITASRFKELQEPECIIVAPTRELINQIYLEARKFSFGTCVRAVVIYGGTQFGHSIRQIVQGCNILCATPGRLMDIIGKEKIGLKQVKYLVLDEADRMLDMGFGPEMKKLISCPGMPSKEQRQTLLFSATFPEEIQRLAGEFLKSNYLFVAVGQVGGACRDVQQSILQVGPVFKKRKLVEILRNIGDERPMVFVETKKKADFIATFLCQEKISTTSIHGDREQREREQALGDFRCGKCPVLVATSVAARGLDIENVQHVINFNLPSTIDEYVHRIGRTGRCGNTGRAISFFDTESDNHLAQPLVKVLSDAQQDVPAWLEEIAFSSYAPPSFSNSTRGAVFASFDTRKNFQGKNTLNTAGISSAQAPNPVDDESWD.

The segment at 23–240 (EKDKYSSGAN…YIPPPPPEDE (218 aa)) is disordered. The segment covering 29–44 (SGANGDTFNRTSASSS) has biased composition (polar residues). Residues 71 to 80 (DIGESSKRET) show a composition bias toward basic and acidic residues. Residues 85 to 95 (GGFGRGKGFGN) are compositionally biased toward gly residues. Polar residues predominate over residues 178–190 (DSGSGDTFQSRSG). Phosphoserine occurs at positions 207 and 211. Residues 213–232 (KSEAEGGESSDIQGPKVTYI) form an interaction with RANBP9 region. Positions 273-301 (LTFEEANLCQTLNNNIAKAGYTKLTPVQK) match the Q motif motif. The Helicase ATP-binding domain maps to 304–487 (IPIVLAGRDL…GEFLKSNYLF (184 aa)). 317 to 324 (AQTGSGKT) serves as a coordination point for ATP. A DEAD box motif is present at residues 431 to 434 (DEAD). The region spanning 515–660 (KLVEILRNIG…DVPAWLEEIA (146 aa)) is the Helicase C-terminal domain. The segment covering 689–703 (GKNTLNTAGISSAQA) has biased composition (polar residues). The segment at 689-713 (GKNTLNTAGISSAQAPNPVDDESWD) is disordered. Serine 711 is subject to Phosphoserine.

Belongs to the DEAD box helicase family. DDX4/VASA subfamily. Found in a mRNP complex, at least composed of TDRD1, TDRD6, TDRD7 and DDX4. Interacts with RANBP9. Interacts with RANBP10. Interacts with PIWIL2 and MAEL. Interacts with BMAL1 and CLOCK. Interacts with Tex19.1 and, probably, Tex19.2. Interacts with RBM46. In terms of tissue distribution, testis.

Its subcellular location is the cytoplasm. It localises to the perinuclear region. The enzyme catalyses ATP + H2O = ADP + phosphate + H(+). In terms of biological role, ATP-dependent RNA helicase required during spermatogenesis to repress transposable elements and preventing their mobilization, which is essential for the germline integrity. Acts via the piRNA metabolic process, which mediates the repression of transposable elements during meiosis by forming complexes composed of piRNAs and Piwi proteins and governs the methylation and subsequent repression of transposons. Involved in the secondary piRNAs metabolic process, the production of piRNAs in fetal male germ cells through a ping-pong amplification cycle. Required for PIWIL2 slicing-triggered piRNA biogenesis: helicase activity enables utilization of one of the slice cleavage fragments generated by PIWIL2 and processing these pre-piRNAs into piRNAs. The polypeptide is Probable ATP-dependent RNA helicase DDX4 (Ddx4) (Rattus norvegicus (Rat)).